The following is a 78-amino-acid chain: Acyl carrier protein (78 aa).

The Carrier domain occupies 2–77 (SDTAERIKKI…DAVSYIDEHK (76 aa)). The residue at position 37 (Ser37) is an O-(pantetheine 4'-phosphoryl)serine.

It belongs to the acyl carrier protein (ACP) family. 4'-phosphopantetheine is transferred from CoA to a specific serine of apo-ACP by AcpS. This modification is essential for activity because fatty acids are bound in thioester linkage to the sulfhydryl of the prosthetic group.

The protein resides in the cytoplasm. The protein operates within lipid metabolism; fatty acid biosynthesis. In terms of biological role, carrier of the growing fatty acid chain in fatty acid biosynthesis. The polypeptide is Acyl carrier protein (Zymomonas mobilis subsp. mobilis (strain ATCC 31821 / ZM4 / CP4)).